Here is a 206-residue protein sequence, read N- to C-terminus: N-(5'-phosphoribosyl)anthranilate isomerase (206 aa).

The protein belongs to the TrpF family.

It catalyses the reaction N-(5-phospho-beta-D-ribosyl)anthranilate = 1-(2-carboxyphenylamino)-1-deoxy-D-ribulose 5-phosphate. The protein operates within amino-acid biosynthesis; L-tryptophan biosynthesis; L-tryptophan from chorismate: step 3/5. This is N-(5'-phosphoribosyl)anthranilate isomerase from Chlamydia caviae (strain ATCC VR-813 / DSM 19441 / 03DC25 / GPIC) (Chlamydophila caviae).